Consider the following 408-residue polypeptide: Phosphoglycerate kinase (408 aa).

Substrate is bound by residues 28 to 30 (DIN), arginine 43, 66 to 69 (HQGR), arginine 123, and arginine 163. Residues glutamate 334 and 358–361 (GGHT) contribute to the ATP site.

Belongs to the phosphoglycerate kinase family. In terms of assembly, monomer.

It localises to the cytoplasm. It carries out the reaction (2R)-3-phosphoglycerate + ATP = (2R)-3-phospho-glyceroyl phosphate + ADP. Its pathway is carbohydrate degradation; glycolysis; pyruvate from D-glyceraldehyde 3-phosphate: step 2/5. The polypeptide is Phosphoglycerate kinase (Pyrobaculum aerophilum (strain ATCC 51768 / DSM 7523 / JCM 9630 / CIP 104966 / NBRC 100827 / IM2)).